The primary structure comprises 171 residues: Putative RING finger protein 027R (171 aa).

Residues 121-163 (CAVCMTNPVWVDFVWSCKHISTCIKCLKMLSRGSNGFKCPICR) form an RING-type zinc finger.

Belongs to the IIV-6 157L family.

In Aedes vexans (Inland floodwater mosquito), this protein is Putative RING finger protein 027R.